A 379-amino-acid polypeptide reads, in one-letter code: Putative nucleosome assembly protein C2D10.11C (379 aa).

Positions 1 to 10 are enriched in basic and acidic residues; the sequence is MSKGPGDFKK. Disordered regions lie at residues 1–30 and 345–379; these read MSKG…DVHL and SDFN…EISD. Positions 16–28 are enriched in polar residues; the sequence is AAQTPQNTPSSDV.

The protein belongs to the nucleosome assembly protein (NAP) family.

It localises to the nucleus. This Schizosaccharomyces pombe (strain 972 / ATCC 24843) (Fission yeast) protein is Putative nucleosome assembly protein C2D10.11C.